A 222-amino-acid chain; its full sequence is Endonuclease V (222 aa).

The Mg(2+) site is built by D43 and D109.

Belongs to the endonuclease V family. It depends on Mg(2+) as a cofactor.

It is found in the cytoplasm. The enzyme catalyses Endonucleolytic cleavage at apurinic or apyrimidinic sites to products with a 5'-phosphate.. Functionally, DNA repair enzyme involved in the repair of deaminated bases. Selectively cleaves double-stranded DNA at the second phosphodiester bond 3' to a deoxyinosine leaving behind the intact lesion on the nicked DNA. This is Endonuclease V from Roseiflexus sp. (strain RS-1).